A 182-amino-acid polypeptide reads, in one-letter code: Large ribosomal subunit protein eL15 (182 aa).

This sequence belongs to the eukaryotic ribosomal protein eL15 family.

This is Large ribosomal subunit protein eL15 (rpl15e) from Methanothermobacter thermautotrophicus (strain ATCC 29096 / DSM 1053 / JCM 10044 / NBRC 100330 / Delta H) (Methanobacterium thermoautotrophicum).